The following is a 140-amino-acid chain: Small ribosomal subunit protein uS12 (140 aa).

D102 carries the post-translational modification 3-methylthioaspartic acid.

It belongs to the universal ribosomal protein uS12 family. In terms of assembly, part of the 30S ribosomal subunit. Contacts proteins S8 and S17. May interact with IF1 in the 30S initiation complex.

Functionally, with S4 and S5 plays an important role in translational accuracy. In terms of biological role, interacts with and stabilizes bases of the 16S rRNA that are involved in tRNA selection in the A site and with the mRNA backbone. Located at the interface of the 30S and 50S subunits, it traverses the body of the 30S subunit contacting proteins on the other side and probably holding the rRNA structure together. The combined cluster of proteins S8, S12 and S17 appears to hold together the shoulder and platform of the 30S subunit. The polypeptide is Small ribosomal subunit protein uS12 (Bacillus anthracis (strain A0248)).